The following is a 418-amino-acid chain: Serine hydroxymethyltransferase (418 aa).

(6S)-5,6,7,8-tetrahydrofolate-binding positions include L121 and 125–127; that span reads GHL. Residue K230 is modified to N6-(pyridoxal phosphate)lysine. (6S)-5,6,7,8-tetrahydrofolate is bound by residues E246 and 355-357; that span reads SPF.

The protein belongs to the SHMT family. In terms of assembly, homodimer. Pyridoxal 5'-phosphate serves as cofactor.

It localises to the cytoplasm. The enzyme catalyses (6R)-5,10-methylene-5,6,7,8-tetrahydrofolate + glycine + H2O = (6S)-5,6,7,8-tetrahydrofolate + L-serine. Its pathway is one-carbon metabolism; tetrahydrofolate interconversion. The protein operates within amino-acid biosynthesis; glycine biosynthesis; glycine from L-serine: step 1/1. In terms of biological role, catalyzes the reversible interconversion of serine and glycine with tetrahydrofolate (THF) serving as the one-carbon carrier. This reaction serves as the major source of one-carbon groups required for the biosynthesis of purines, thymidylate, methionine, and other important biomolecules. Also exhibits THF-independent aldolase activity toward beta-hydroxyamino acids, producing glycine and aldehydes, via a retro-aldol mechanism. The protein is Serine hydroxymethyltransferase of Streptococcus pneumoniae serotype 19F (strain G54).